The chain runs to 1202 residues: Stress response protein NST1 (1202 aa).

Disordered regions lie at residues 28–217 (RHLN…EDDA), 236–291 (GHYQ…SGSK), 390–423 (RSAPHPRPLMTTHPPPGPYDDEEEDEYSGEDDEE), 487–543 (AHPS…RMEE), 579–852 (ELEE…SMLP), 904–967 (PNQA…DSDV), and 979–1015 (LLDEEDVPEIPDRRSSVQQHGSMRSMPIGFGFPDAPN). The segment covering 158 to 167 (REKEAAKKAA) has biased composition (basic and acidic residues). Positions 178–187 (NGVSSGSTHL) are enriched in polar residues. A compositionally biased stretch (acidic residues) spans 204–217 (PELDDPQYDDEDDA). A compositionally biased stretch (basic residues) spans 252–261 (KKPRKKKKGA). 2 stretches are compositionally biased toward acidic residues: residues 408–423 (YDDEEEDEYSGEDDEE) and 504–536 (PEEEEYDDEVDEEEGFEDEDYEEDDEDEDEAMT). The stretch at 557–704 (EQRVLQAYRE…EKKVKDDAKR (148 aa)) forms a coiled coil. The segment covering 579 to 710 (ELEEENEKKD…DAKRKERDRA (132 aa)) has biased composition (basic and acidic residues). The span at 754-789 (RPRQTSRQGSHGSSPKTPQVAPGTSKSMSPTSQAQG) shows a compositional bias: polar residues. Residues 816-828 (SPMPPIGPPPGLS) are compositionally biased toward pro residues. Low complexity predominate over residues 830-848 (PPGLSMGLPPGLNGFPGPG). Over residues 916 to 926 (TQHSRQGSGSF) the composition is skewed to polar residues. The segment covering 954 to 967 (KPHDSNKHGQDSDV) has biased composition (basic and acidic residues).

This sequence belongs to the NST1 family.

The protein localises to the cytoplasm. Functionally, may act as a negative regulator of salt tolerance. This is Stress response protein NST1 (NST1) from Phaeosphaeria nodorum (strain SN15 / ATCC MYA-4574 / FGSC 10173) (Glume blotch fungus).